We begin with the raw amino-acid sequence, 300 residues long: Lipoyl synthase 2 (300 aa).

The [4Fe-4S] cluster site is built by cysteine 46, cysteine 51, cysteine 57, cysteine 72, cysteine 76, cysteine 79, and serine 294. Residues 58–283 enclose the Radical SAM core domain; sequence YAQKTATFLL…GKLAREMGFS (226 aa).

This sequence belongs to the radical SAM superfamily. Lipoyl synthase family. [4Fe-4S] cluster serves as cofactor.

The protein resides in the cytoplasm. The enzyme catalyses [[Fe-S] cluster scaffold protein carrying a second [4Fe-4S](2+) cluster] + N(6)-octanoyl-L-lysyl-[protein] + 2 oxidized [2Fe-2S]-[ferredoxin] + 2 S-adenosyl-L-methionine + 4 H(+) = [[Fe-S] cluster scaffold protein] + N(6)-[(R)-dihydrolipoyl]-L-lysyl-[protein] + 4 Fe(3+) + 2 hydrogen sulfide + 2 5'-deoxyadenosine + 2 L-methionine + 2 reduced [2Fe-2S]-[ferredoxin]. The protein operates within protein modification; protein lipoylation via endogenous pathway; protein N(6)-(lipoyl)lysine from octanoyl-[acyl-carrier-protein]: step 2/2. Functionally, catalyzes the radical-mediated insertion of two sulfur atoms into the C-6 and C-8 positions of the octanoyl moiety bound to the lipoyl domains of lipoate-dependent enzymes, thereby converting the octanoylated domains into lipoylated derivatives. This chain is Lipoyl synthase 2, found in Nostoc sp. (strain PCC 7120 / SAG 25.82 / UTEX 2576).